Consider the following 1366-residue polypeptide: MTNTGILAPSSQQSEPEWWTKTQKFFSRENTITPTFGYFRLLFGTQPGKTDIALIVIGTIAGIGAGIPFPLLGILFGELVDDLNSSTCSTTQAPPGGYQAAITTKVLQVIYASILNFVCMYIHTGCWSMVGERLVRRLRTKYFHSLLRQEIAFTDTLPSGDVTSRLVSDIEVIQAGTSEKVGLFIGTISYFVAAYIVAFLKVATIAAMLMSVVPIYFLMAFGGGHYIKKYSSRISTHINAATSIVSSSLSHMSIVHAFNANARLEALFAQHLVSARMDALKKAITHSIQFGMLYFVAYASNALAFWQGSRMIADLAEGKPSKVSVGAVYTVIFVLLDASFVLSQMAPFMHIFASAASAGDRLMTTIKRQSAIDGTSSEGDSTISLASEEIELQDVTFNYPARPEVPVLQGVSFKIPPNKHTAIVGTSGSGKSTVVALLERLYDPITGCVRVGNRDLKEINVRHLRGSIGLVQQEPNLLDRSILENIAHGLVSSSQEKHKHLLPILLGPSLSELTEKIRQGASEDEAVAEQGDVVREIVNLARHAATLSNAIDFINALPDGLATRVGSSGAELSGGQKQRIALARALIRDPPVLLLDEATAALDSTSERLIQAALTKVSENVTTVSIAHRLATAKDADNIIVMQKGKVMEQGTHMDLVARDGVYAGMVRLQNIGKFSSSSSIMTESTQVDVNIDRSLTTDTLLNKEEKLSLEQGVLDEKEKPAQLYMPEEADSLPTEPEAKKEKPKQTLWATMRGSFPLIRPNLLLISLGLITSIMIGVSYTGEAVIFGHTVGSLSVCRGGPSIRSSGMLFGLLFFILAVAKFAAVIVNGAAFGWAAEKTLYRTRVLSLRSLLRQPLEWHNADGRTPGLLVALVTSDASALSSLTGTTIGVLFSTVANLFAGVILSHVIAWKIAVVLLATLPVLLASGVLRLRVMAQYQKKHQKAYAKATAITVETVDNIKSIAAFSLEQEAYSVFNRSLKAPYKSNMKSVLHGNFWLSLAYSISTLVYALAYWWGSQQILAGMYTQVQFFIVLPALLFSTQSCGQMFALVPDISKARIAASNIVDLLSIKHEGDEEYDKTGSKASAKHTDPRFNMLEDKPRDVEAQLTTTTPSSFPTKGMGVQFRNVHFRYPSRPNQPALDDLSINISPGQFCALVGPSGSGKSTTFALLEKFYNPASGSIIIDGVDITKQSGAAFRDTIALVPQENVMFEGTVAFNIGLGARPDVEATQEEIEEACRLANIHDTIAALPDGYNTVCSQDGKQFSGGQRQRLSIARALVRKPRLLLLDESTSALDVESEKHVQDALAKVARKTTIVAIAHRLNTIHRADRIFMIEGGKCVDQGTHAELVERCESYRANVIHQSLDA.

Residues 52–72 form a helical membrane-spanning segment; that stretch reads IALIVIGTIAGIGAGIPFPLL. In terms of domain architecture, ABC transmembrane type-1 1 spans 56-354; sequence VIGTIAGIGA…MAPFMHIFAS (299 aa). N-linked (GlcNAc...) asparagine glycosylation occurs at N84. 5 consecutive transmembrane segments (helical) span residues 106-126, 180-200, 202-222, 288-308, and 323-343; these read VLQVIYASILNFVCMYIHTGC, KVGLFIGTISYFVAAYIVAFL, VATIAAMLMSVVPIYFLMAFG, IQFGMLYFVAYASNALAFWQG, and VSVGAVYTVIFVLLDASFVLS. In terms of domain architecture, ABC transporter 1 spans 390–669; sequence IELQDVTFNY…DGVYAGMVRL (280 aa). Residue 425–432 participates in ATP binding; that stretch reads GTSGSGKS. N-linked (GlcNAc...) asparagine glycosylation is present at N620. The tract at residues 727–746 is disordered; it reads PEEADSLPTEPEAKKEKPKQ. The next 4 helical transmembrane spans lie at 768 to 788, 807 to 827, 868 to 888, and 898 to 918; these read LGLITSIMIGVSYTGEAVIFG, GMLFGLLFFILAVAKFAAVIV, LLVALVTSDASALSSLTGTTI, and LFAGVILSHVIAWKIAVVLLA. Residues 768–1055 enclose the ABC transmembrane type-1 2 domain; the sequence is LGLITSIMIG…MFALVPDISK (288 aa). An N-linked (GlcNAc...) asparagine glycan is attached at N976. 2 helical membrane passes run 995–1015 and 1019–1039; these read FWLSLAYSISTLVYALAYWWG and ILAGMYTQVQFFIVLPALLFS. In terms of domain architecture, ABC transporter 2 spans 1122-1361; sequence VQFRNVHFRY…CESYRANVIH (240 aa). 1157-1164 contacts ATP; sequence GPSGSGKS.

Belongs to the ABC transporter superfamily. ABCB family. Multidrug resistance exporter (TC 3.A.1.201) subfamily.

Its subcellular location is the cell membrane. Functionally, pleiotropic ABC efflux transporter that may be involved in the modulation susceptibility to a wide range of unrelated cytotoxic compounds. Does not act as an efflux pump for azoles, including fluconazole, itraconazole, ketoconazole, miconazole and voriconazole, nor does it modulate susceptibility to cycloheximide. This is ABC multidrug transporter MDR2 from Trichophyton rubrum (strain ATCC MYA-4607 / CBS 118892) (Athlete's foot fungus).